We begin with the raw amino-acid sequence, 364 residues long: Probable UDP-arabinopyranose mutase 1 (364 aa).

The short motif at aspartate 110–aspartate 112 is the DXD motif element. Arginine 158 is a glycosylation site (N-linked (Glc...) arginine).

Belongs to the RGP family. In terms of assembly, homopentamer or homohexamer. Mn(2+) serves as cofactor. Requires Mg(2+) as cofactor. Reversibly glycosylated by UDP-glucose, UDP-xylose and UDP-galactose.

Its subcellular location is the secreted. It is found in the cell wall. It localises to the cell junction. The protein resides in the plasmodesma. The protein localises to the golgi apparatus. It carries out the reaction UDP-beta-L-arabinofuranose = UDP-beta-L-arabinopyranose. Probable UDP-L-arabinose mutase involved in the biosynthesis of cell wall non-cellulosic polysaccharides. Was initially shown to possess an autoglycosylating activity which is dependent on the presence of UDP-glucose and manganese. In Zea mays (Maize), this protein is Probable UDP-arabinopyranose mutase 1.